We begin with the raw amino-acid sequence, 876 residues long: Alanine--tRNA ligase (876 aa).

Residues histidine 564, histidine 568, cysteine 666, and histidine 670 each coordinate Zn(2+).

This sequence belongs to the class-II aminoacyl-tRNA synthetase family. Homotetramer. Zn(2+) serves as cofactor.

It localises to the cytoplasm. The catalysed reaction is tRNA(Ala) + L-alanine + ATP = L-alanyl-tRNA(Ala) + AMP + diphosphate. In terms of biological role, catalyzes the attachment of alanine to tRNA(Ala) in a two-step reaction: alanine is first activated by ATP to form Ala-AMP and then transferred to the acceptor end of tRNA(Ala). Also edits incorrectly charged Ser-tRNA(Ala) and Gly-tRNA(Ala) via its editing domain. The chain is Alanine--tRNA ligase from Salmonella typhimurium (strain LT2 / SGSC1412 / ATCC 700720).